A 35-amino-acid polypeptide reads, in one-letter code: Non-specific lipid-transfer protein 1 (35 aa).

A disulfide bridge links Cys-13 with Cys-28.

As to expression, seeds.

Functionally, plant non-specific lipid-transfer proteins transfer phospholipids as well as galactolipids across membranes. May play a role in wax or cutin deposition in the cell walls of expanding epidermal cells and certain secretory tissues. Inhibits the growth of F.oxysporum and P.infestans. The chain is Non-specific lipid-transfer protein 1 from Nigella sativa (Black cumin).